Reading from the N-terminus, the 1024-residue chain is Probable serine/threonine-protein kinase DDB_G0271682 (1024 aa).

The interval 187–261 (NIDNNNNNNN…RDNENNHNHQ (75 aa)) is disordered. The segment covering 190–244 (NNNNNNNNNNNNNNNNNNNNNNNNNNNNNNNNNNNNNNNNNNNNNNNNNNNNNNN) has biased composition (low complexity). Over residues 250-261 (RSRDNENNHNHQ) the composition is skewed to basic and acidic residues. Protein kinase domains lie at 360–609 (LLFI…LKLM) and 645–1018 (ILVT…ELLI). Residues 366 to 374 (IGSGACGEV) and Lys-387 each bind ATP. Asp-484 (proton acceptor) is an active-site residue. Residues 651-659 (VGGNVSGNV) and Lys-719 each bind ATP. Composition is skewed to low complexity over residues 823–851 (NNNS…NNNN) and 862–874 (ENTN…TTTT). A disordered region spans residues 823-874 (NNNSNQNNNNNNNNNNNNNNNNNNNNNNNKKNDGGDDNGENTNTTTTTTTTT).

Belongs to the protein kinase superfamily. TKL Ser/Thr protein kinase family.

It carries out the reaction L-seryl-[protein] + ATP = O-phospho-L-seryl-[protein] + ADP + H(+). The enzyme catalyses L-threonyl-[protein] + ATP = O-phospho-L-threonyl-[protein] + ADP + H(+). This Dictyostelium discoideum (Social amoeba) protein is Probable serine/threonine-protein kinase DDB_G0271682.